The following is a 1358-amino-acid chain: DNA-directed RNA polymerase subunit beta (1358 aa).

It belongs to the RNA polymerase beta chain family. In terms of assembly, the RNAP catalytic core consists of 2 alpha, 1 beta, 1 beta' and 1 omega subunit. When a sigma factor is associated with the core the holoenzyme is formed, which can initiate transcription.

It carries out the reaction RNA(n) + a ribonucleoside 5'-triphosphate = RNA(n+1) + diphosphate. DNA-dependent RNA polymerase catalyzes the transcription of DNA into RNA using the four ribonucleoside triphosphates as substrates. In Francisella tularensis subsp. novicida (strain U112), this protein is DNA-directed RNA polymerase subunit beta.